Consider the following 703-residue polypeptide: Subtilisin-like protease SBT4.7 (703 aa).

The first 19 residues, 1 to 19, serve as a signal peptide directing secretion; that stretch reads MAKRDYFCFVVLFLSSVSA. The propeptide at 20–107 is activation peptide; sequence VIDDPQNKQV…VFPNINYKLQ (88 aa). An Inhibitor I9 domain is found at 29 to 106; the sequence is VYVVYMGSLP…SVFPNINYKL (78 aa). Residues 111–556 enclose the Peptidase S8 domain; it reads SWDFLGLKEG…AGHVDQIAAI (446 aa). Aspartate 139 acts as the Charge relay system in catalysis. N-linked (GlcNAc...) asparagine glycosylation is present at asparagine 170. The active-site Charge relay system is histidine 194. 4 N-linked (GlcNAc...) asparagine glycosylation sites follow: asparagine 217, asparagine 360, asparagine 416, and asparagine 433. Residues 350–411 enclose the PA domain; it reads KYPLVYGDNF…LLPPDDFDSL (62 aa). Serine 495 serves as the catalytic Charge relay system. 3 N-linked (GlcNAc...) asparagine glycosylation sites follow: asparagine 577, asparagine 615, and asparagine 633.

This sequence belongs to the peptidase S8 family. In terms of processing, the C-terminal propeptide is autocleaved.

It localises to the secreted. This chain is Subtilisin-like protease SBT4.7, found in Arabidopsis thaliana (Mouse-ear cress).